A 984-amino-acid chain; its full sequence is Probable beta-galactosidase C (984 aa).

Residues 1-23 (MRLLSFIYLVWLALLTGTPQVSA) form the signal peptide. Residues Tyr82, Asn127, Ala128, Glu129, and Asn187 each coordinate substrate. The Proton donor role is filled by Glu188. Asn197 carries an N-linked (GlcNAc...) asparagine glycan. Tyr251 contacts substrate. A disulfide bridge links Cys257 with Cys304. N-linked (GlcNAc...) asparagine glycosylation occurs at Asn276. Catalysis depends on Glu287, which acts as the Nucleophile. Tyr353 contacts substrate. N-linked (GlcNAc...) asparagine glycosylation is found at Asn391, Asn421, Asn434, Asn517, Asn602, Asn677, Asn715, Asn720, Asn759, and Asn805.

This sequence belongs to the glycosyl hydrolase 35 family.

The protein localises to the secreted. It carries out the reaction Hydrolysis of terminal non-reducing beta-D-galactose residues in beta-D-galactosides.. Its function is as follows. Cleaves beta-linked terminal galactosyl residues from gangliosides, glycoproteins, and glycosaminoglycans. The polypeptide is Probable beta-galactosidase C (lacC) (Aspergillus flavus (strain ATCC 200026 / FGSC A1120 / IAM 13836 / NRRL 3357 / JCM 12722 / SRRC 167)).